A 440-amino-acid polypeptide reads, in one-letter code: Thymidine phosphorylase (440 aa).

The protein belongs to the thymidine/pyrimidine-nucleoside phosphorylase family. As to quaternary structure, homodimer.

It carries out the reaction thymidine + phosphate = 2-deoxy-alpha-D-ribose 1-phosphate + thymine. The protein operates within pyrimidine metabolism; dTMP biosynthesis via salvage pathway; dTMP from thymine: step 1/2. The enzymes which catalyze the reversible phosphorolysis of pyrimidine nucleosides are involved in the degradation of these compounds and in their utilization as carbon and energy sources, or in the rescue of pyrimidine bases for nucleotide synthesis. This chain is Thymidine phosphorylase, found in Rhizobium meliloti (strain 1021) (Ensifer meliloti).